The sequence spans 328 residues: Phenylalanine--tRNA ligase alpha subunit (328 aa).

A Mg(2+)-binding site is contributed by Glu245.

It belongs to the class-II aminoacyl-tRNA synthetase family. Phe-tRNA synthetase alpha subunit type 1 subfamily. In terms of assembly, tetramer of two alpha and two beta subunits. Requires Mg(2+) as cofactor.

Its subcellular location is the cytoplasm. It carries out the reaction tRNA(Phe) + L-phenylalanine + ATP = L-phenylalanyl-tRNA(Phe) + AMP + diphosphate + H(+). The sequence is that of Phenylalanine--tRNA ligase alpha subunit from Helicobacter pylori (strain G27).